A 371-amino-acid chain; its full sequence is Cytochrome b (371 aa).

4 helical membrane passes run 25–45 (FGSMLLSCLMLQVTTGFFLAV), 69–90 (WMMQNTHAIGASLFFICIYIHI), 105–125 (WMSGTTLLITLMATAFFGYIL), and 170–190 (FFALHFILPFIIISLSSLHIL). Heme b is bound by residues histidine 75 and histidine 89. 2 residues coordinate heme b: histidine 174 and histidine 188. Histidine 193 is a binding site for a ubiquinone. 4 helical membrane passes run 218-238 (YKDLLLLTLLLTLLLLTTFFL), 280-300 (LGGALALVASILIIMTMPFTH), 312-332 (MSQLMFWTLISTFMTITWAAT), and 339-358 (FMMISQTASMIYFMFFISNP).

The protein belongs to the cytochrome b family. As to quaternary structure, the cytochrome bc1 complex contains 3 respiratory subunits (MT-CYB, CYC1 and UQCRFS1), 2 core proteins (UQCRC1 and UQCRC2) and probably 6 low-molecular weight proteins. Requires heme b as cofactor.

Its subcellular location is the mitochondrion inner membrane. Functionally, component of the ubiquinol-cytochrome c reductase complex (complex III or cytochrome b-c1 complex) that is part of the mitochondrial respiratory chain. The b-c1 complex mediates electron transfer from ubiquinol to cytochrome c. Contributes to the generation of a proton gradient across the mitochondrial membrane that is then used for ATP synthesis. This is Cytochrome b (MT-CYB) from Casarea dussumieri (Round Island keel-scaled boa).